The chain runs to 274 residues: Large ribosomal subunit protein uL2cz/uL2cy (274 aa).

Disordered stretches follow at residues 1-22 (MAIH…DSQV) and 225-274 (PVDH…RRSK).

The protein belongs to the universal ribosomal protein uL2 family. Part of the 50S ribosomal subunit.

The protein localises to the plastid. The protein resides in the chloroplast. The polypeptide is Large ribosomal subunit protein uL2cz/uL2cy (rpl2-A) (Nasturtium officinale (Watercress)).